A 223-amino-acid polypeptide reads, in one-letter code: Dephospho-CoA kinase (223 aa).

The DPCK domain maps to 22-223 (LIGLSGPSCS…LLQEVKKRGF (202 aa)). 30 to 35 (CSGKNT) is a binding site for ATP.

This sequence belongs to the CoaE family.

It localises to the cytoplasm. It catalyses the reaction 3'-dephospho-CoA + ATP = ADP + CoA + H(+). It functions in the pathway cofactor biosynthesis; coenzyme A biosynthesis; CoA from (R)-pantothenate: step 5/5. In terms of biological role, catalyzes the phosphorylation of the 3'-hydroxyl group of dephosphocoenzyme A to form coenzyme A. The sequence is that of Dephospho-CoA kinase from Treponema denticola (strain ATCC 35405 / DSM 14222 / CIP 103919 / JCM 8153 / KCTC 15104).